We begin with the raw amino-acid sequence, 442 residues long: uncharacterized protein (442 aa).

Residues 1-23 (MEILLIVLGAVVAGLLCPVQTAA) form the signal peptide. Disordered stretches follow at residues 36-67 (TSISIHHGTRTPTSSGELSQSTFSSSSTNSSD) and 91-115 (ANETTLSGNATATETSREPQPTNTR). Low complexity predominate over residues 48-67 (TSSGELSQSTFSSSSTNSSD). Asparagine 64, asparagine 92, asparagine 99, asparagine 130, asparagine 174, asparagine 225, asparagine 244, asparagine 346, asparagine 363, asparagine 386, and asparagine 398 each carry an N-linked (GlcNAc...) asparagine glycan.

It localises to the secreted. This is an uncharacterized protein from Arthroderma benhamiae (strain ATCC MYA-4681 / CBS 112371) (Trichophyton mentagrophytes).